The chain runs to 448 residues: Bifunctional protein GlmU (448 aa).

The pyrophosphorylase stretch occupies residues 1 to 232 (MSERSLLVVV…VDEVAGVNSR (232 aa)). UDP-N-acetyl-alpha-D-glucosamine is bound by residues 11–14 (LAAG), Lys25, Gln78, and 83–84 (GT). Asp108 serves as a coordination point for Mg(2+). The UDP-N-acetyl-alpha-D-glucosamine site is built by Gly144, Glu158, Asn173, and Asn230. A Mg(2+)-binding site is contributed by Asn230. Positions 233-253 (LQLAEAEAILQGRLRRAAMAG) are linker. The N-acetyltransferase stretch occupies residues 254–448 (GATLVAPETV…LRAARGKPKV (195 aa)). Arg319 and Lys337 together coordinate UDP-N-acetyl-alpha-D-glucosamine. His349 functions as the Proton acceptor in the catalytic mechanism. Tyr352 and Asn363 together coordinate UDP-N-acetyl-alpha-D-glucosamine. Acetyl-CoA contacts are provided by residues Ala366, 372-373 (NY), Ser409, and Arg426.

It in the N-terminal section; belongs to the N-acetylglucosamine-1-phosphate uridyltransferase family. In the C-terminal section; belongs to the transferase hexapeptide repeat family. In terms of assembly, homotrimer. It depends on Mg(2+) as a cofactor.

Its subcellular location is the cytoplasm. It carries out the reaction alpha-D-glucosamine 1-phosphate + acetyl-CoA = N-acetyl-alpha-D-glucosamine 1-phosphate + CoA + H(+). It catalyses the reaction N-acetyl-alpha-D-glucosamine 1-phosphate + UTP + H(+) = UDP-N-acetyl-alpha-D-glucosamine + diphosphate. The protein operates within nucleotide-sugar biosynthesis; UDP-N-acetyl-alpha-D-glucosamine biosynthesis; N-acetyl-alpha-D-glucosamine 1-phosphate from alpha-D-glucosamine 6-phosphate (route II): step 2/2. It functions in the pathway nucleotide-sugar biosynthesis; UDP-N-acetyl-alpha-D-glucosamine biosynthesis; UDP-N-acetyl-alpha-D-glucosamine from N-acetyl-alpha-D-glucosamine 1-phosphate: step 1/1. It participates in bacterial outer membrane biogenesis; LPS lipid A biosynthesis. Its function is as follows. Catalyzes the last two sequential reactions in the de novo biosynthetic pathway for UDP-N-acetylglucosamine (UDP-GlcNAc). The C-terminal domain catalyzes the transfer of acetyl group from acetyl coenzyme A to glucosamine-1-phosphate (GlcN-1-P) to produce N-acetylglucosamine-1-phosphate (GlcNAc-1-P), which is converted into UDP-GlcNAc by the transfer of uridine 5-monophosphate (from uridine 5-triphosphate), a reaction catalyzed by the N-terminal domain. The chain is Bifunctional protein GlmU from Azorhizobium caulinodans (strain ATCC 43989 / DSM 5975 / JCM 20966 / LMG 6465 / NBRC 14845 / NCIMB 13405 / ORS 571).